We begin with the raw amino-acid sequence, 281 residues long: Ribosomal protein L11 methyltransferase (281 aa).

Positions 133, 154, 175, and 216 each coordinate S-adenosyl-L-methionine.

Belongs to the methyltransferase superfamily. PrmA family.

The protein resides in the cytoplasm. It catalyses the reaction L-lysyl-[protein] + 3 S-adenosyl-L-methionine = N(6),N(6),N(6)-trimethyl-L-lysyl-[protein] + 3 S-adenosyl-L-homocysteine + 3 H(+). Functionally, methylates ribosomal protein L11. The chain is Ribosomal protein L11 methyltransferase from Campylobacter jejuni subsp. jejuni serotype O:23/36 (strain 81-176).